We begin with the raw amino-acid sequence, 358 residues long: ATPase ASNA1 homolog (358 aa).

35-42 (KGGVGKTT) is an ATP binding site. Residue Asp64 is part of the active site. 2 residues coordinate ATP: Glu235 and Asn262.

Belongs to the arsA ATPase family. As to quaternary structure, homodimer.

It localises to the cytoplasm. It is found in the endoplasmic reticulum. In terms of biological role, ATPase required for the post-translational delivery of tail-anchored (TA) proteins to the endoplasmic reticulum. Recognizes and selectively binds the transmembrane domain of TA proteins in the cytosol. This complex then targets to the endoplasmic reticulum by membrane-bound receptors, where the tail-anchored protein is released for insertion. This process is regulated by ATP binding and hydrolysis. ATP binding drives the homodimer towards the closed dimer state, facilitating recognition of newly synthesized TA membrane proteins. ATP hydrolysis is required for insertion. Subsequently, the homodimer reverts towards the open dimer state, lowering its affinity for the membrane-bound receptor, and returning it to the cytosol to initiate a new round of targeting. This is ATPase ASNA1 homolog from Babesia bovis.